A 90-amino-acid polypeptide reads, in one-letter code: UPF0213 protein lmo0166 (90 aa).

The region spanning 5–80 is the GIY-YIG domain; that stretch reads SEHFFYVLKC…KKLSRKNKDA (76 aa).

It belongs to the UPF0213 family.

The protein is UPF0213 protein lmo0166 of Listeria monocytogenes serovar 1/2a (strain ATCC BAA-679 / EGD-e).